Here is a 682-residue protein sequence, read N- to C-terminus: Iron-phytosiderophore transporter yellow stripe 1 (682 aa).

The disordered stretch occupies residues 1 to 36; the sequence is MDLARRGGAAGADDEGEIERHEPAPEDMESDPAAAR. Helical transmembrane passes span 56-76, 79-99, 124-144, 167-187, 236-256, 288-308, 334-354, 396-416, 428-448, 460-480, 514-534, 549-569, 574-594, 612-632, and 640-660; these read GVVAALLIGFMYSVIVMKIAL, GLVPTLNVSAALMAFLALRGW, CAVACYTIAFGGGFGSTLLGL, GFGWMAGFVAAISFAGLLSLI, LSFVWSFFQWFYTGGEVCGFV, LVNISTLLGAILSWGILWPLI, FLCIALIMGDGTYHFFKVFGV, FPAWAAYAGYAALTVVSAVII, VIVAYVLAPLLGFANSYGTGL, IALFIFAAWAGRDNGVIAGLA, VAQFIGTAMGCVVAPLTFLLF, APYGLIYRNMAILGVEGFSVL, LALSAGFFAFAFVFSVARDVL, FLVGGSFAIDMCVGSLAVFVW, and AVFMVPAVASGLICGDGIWTF.

Belongs to the YSL (TC 2.A.67.2) family. In terms of tissue distribution, expressed in roots of young maize seedlings. Not detected in leaves of iron-sufficient plants, but accumulates in roots and leaves of iron-deficient plants.

Its subcellular location is the membrane. Functionally, involved in Fe(3+) uptake. Acts as a proton-coupled symporter for phytosiderophore- and nicotianamine-chelated metals. Capable of transporting either Fe(2+)-nicotianamine or Fe(3+)-phytosiderophore. May transport iron, zinc, nickel, copper and, at a lower rate, manganese and cadmium. This is Iron-phytosiderophore transporter yellow stripe 1 (YS1) from Zea mays (Maize).